An 83-amino-acid chain; its full sequence is Small ribosomal subunit protein bS16 (83 aa).

It belongs to the bacterial ribosomal protein bS16 family.

In Pseudomonas fluorescens (strain SBW25), this protein is Small ribosomal subunit protein bS16.